A 52-amino-acid polypeptide reads, in one-letter code: ATP synthase protein 8 (52 aa).

Residues 7-23 form a helical membrane-spanning segment; that stretch reads MMWFSLFIMFSMTMMLF.

It belongs to the ATPase protein 8 family. In terms of assembly, F-type ATPases have 2 components, CF(1) - the catalytic core - and CF(0) - the membrane proton channel.

It localises to the mitochondrion membrane. Functionally, mitochondrial membrane ATP synthase (F(1)F(0) ATP synthase or Complex V) produces ATP from ADP in the presence of a proton gradient across the membrane which is generated by electron transport complexes of the respiratory chain. F-type ATPases consist of two structural domains, F(1) - containing the extramembraneous catalytic core and F(0) - containing the membrane proton channel, linked together by a central stalk and a peripheral stalk. During catalysis, ATP synthesis in the catalytic domain of F(1) is coupled via a rotary mechanism of the central stalk subunits to proton translocation. Part of the complex F(0) domain. Minor subunit located with subunit a in the membrane. The sequence is that of ATP synthase protein 8 (MT-ATP8) from Locusta migratoria (Migratory locust).